The chain runs to 106 residues: Small ribosomal subunit protein uS10 (106 aa).

Belongs to the universal ribosomal protein uS10 family. In terms of assembly, part of the 30S ribosomal subunit.

Its function is as follows. Involved in the binding of tRNA to the ribosomes. This is Small ribosomal subunit protein uS10 from Pyrobaculum calidifontis (strain DSM 21063 / JCM 11548 / VA1).